Consider the following 229-residue polypeptide: Homeobox-leucine zipper protein HOX3 (229 aa).

The tract at residues 1–82 (MMGATSPSGL…GPHRPKKLRL (82 aa)) is disordered. Acidic residues predominate over residues 52-68 (GEEEEFPMGSVEEDEEE). The segment at residues 75-134 (HRPKKLRLSKEQSRLLEESFRLNHTLTPKQKEALAIKLKLRPRQVEVWFQNRRARTKLKQ) is a DNA-binding region (homeobox). Residues 133–177 (KQTEMECEYLKRCFGSLTEENRRLQREVEELRAMRVAPPTVLSPH) form a leucine-zipper region. The disordered stretch occupies residues 198-229 (AATGPPAVRPPPSSAAAAAPSPFHPRRPSAAF).

This sequence belongs to the HD-ZIP homeobox family. Class II subfamily. In terms of assembly, homodimer. May form a heterodimer with HOX1, HOX2 or HOX7. In terms of tissue distribution, expressed in seedlings, roots, leaves, nodes, internodes, flowers and embryo.

It is found in the nucleus. Its function is as follows. Probable transcription repressor that binds to the DNA sequence 5'-CAAT[GC]ATTG-3'. This Oryza sativa subsp. indica (Rice) protein is Homeobox-leucine zipper protein HOX3 (HOX3).